A 429-amino-acid chain; its full sequence is Formate-dependent phosphoribosylglycinamide formyltransferase (429 aa).

Residues 26–27 and glutamate 86 each bind N(1)-(5-phospho-beta-D-ribosyl)glycinamide; that span reads EL. ATP is bound by residues arginine 118, lysine 159, 199 to 202, and glutamate 207; that span reads EEHI. In terms of domain architecture, ATP-grasp spans 123–319; sequence ETLVKEAKVP…EFGLHLRAVL (197 aa). Glutamate 276 and glutamate 288 together coordinate Mg(2+). Residues aspartate 295, lysine 375, and 382–383 contribute to the N(1)-(5-phospho-beta-D-ribosyl)glycinamide site; that span reads RR.

The protein belongs to the PurK/PurT family. Homodimer.

The catalysed reaction is N(1)-(5-phospho-beta-D-ribosyl)glycinamide + formate + ATP = N(2)-formyl-N(1)-(5-phospho-beta-D-ribosyl)glycinamide + ADP + phosphate + H(+). The protein operates within purine metabolism; IMP biosynthesis via de novo pathway; N(2)-formyl-N(1)-(5-phospho-D-ribosyl)glycinamide from N(1)-(5-phospho-D-ribosyl)glycinamide (formate route): step 1/1. Functionally, involved in the de novo purine biosynthesis. Catalyzes the transfer of formate to 5-phospho-ribosyl-glycinamide (GAR), producing 5-phospho-ribosyl-N-formylglycinamide (FGAR). Formate is provided by PurU via hydrolysis of 10-formyl-tetrahydrofolate. The chain is Formate-dependent phosphoribosylglycinamide formyltransferase from Pyrococcus furiosus (strain ATCC 43587 / DSM 3638 / JCM 8422 / Vc1).